Here is a 299-residue protein sequence, read N- to C-terminus: Small ribosomal subunit protein uS2 (299 aa).

A compositionally biased stretch (low complexity) spans 259 to 291; sequence AAASAAGPTSWEADGADWAASSAPAAAGESWAE. The segment at 259 to 299 is disordered; that stretch reads AAASAAGPTSWEADGADWAASSAPAAAGESWAETQPAEGKW.

Belongs to the universal ribosomal protein uS2 family. As to quaternary structure, component of the small ribosomal subunit. Mature ribosomes consist of a small (40S) and a large (60S) subunit. The 40S subunit contains about 33 different proteins and 1 molecule of RNA (18S). The 60S subunit contains about 49 different proteins and 3 molecules of RNA (25S, 5.8S and 5S). Interacts with rps21.

The protein resides in the cytoplasm. Required for the assembly and/or stability of the 40S ribosomal subunit. Required for the processing of the 20S rRNA-precursor to mature 18S rRNA in a late step of the maturation of 40S ribosomal subunits. This chain is Small ribosomal subunit protein uS2 (rps0), found in Aspergillus flavus (strain ATCC 200026 / FGSC A1120 / IAM 13836 / NRRL 3357 / JCM 12722 / SRRC 167).